Consider the following 287-residue polypeptide: Probable prolyl 4-hydroxylase 3 (287 aa).

Over 1 to 16 (MAKLRHSRFQARKWST) the chain is Cytoplasmic. Residues 17-37 (LMLVLFMLFMLTIVLLMLLAF) traverse the membrane as a helical; Signal-anchor for type II membrane protein segment. The Lumenal portion of the chain corresponds to 38–287 (GVFSLPINND…KWMHVGEYKI (250 aa)). One can recognise a Fe2OG dioxygenase domain in the interval 159–282 (HGEGLQVLHY…KWSSTKWMHV (124 aa)). Fe cation is bound by residues His-177 and Asp-179. Asn-218 carries an N-linked (GlcNAc...) asparagine glycan. His-263 is a Fe cation binding site. Lys-273 contacts 2-oxoglutarate.

This sequence belongs to the P4HA family. Fe(2+) is required as a cofactor. Requires L-ascorbate as cofactor.

The protein resides in the endoplasmic reticulum membrane. It carries out the reaction L-prolyl-[collagen] + 2-oxoglutarate + O2 = trans-4-hydroxy-L-prolyl-[collagen] + succinate + CO2. Its function is as follows. Catalyzes the post-translational formation of 4-hydroxyproline in -Xaa-Pro-Gly- sequences in proline-rich peptide sequences of plant glycoproteins and other proteins. Hydroxyprolines are important constituent of many plant cell wall glycoproteins such as extensins, hydroxyproline-rich glycoproteins, lectins and arabinogalactan proteins. This is Probable prolyl 4-hydroxylase 3 from Arabidopsis thaliana (Mouse-ear cress).